A 102-amino-acid polypeptide reads, in one-letter code: Acid shock protein (102 aa).

The first 21 residues, Met1–Ala21, serve as a signal peptide directing secretion. A compositionally biased stretch (low complexity) spans Ala22–Lys41. A propeptide spanning residues Ala22–Gln58 is cleaved from the precursor. Residues Ala22–Ala102 form a disordered region. The span at Ala80–His90 shows a compositional bias: basic residues. Positions Gln91–Ala102 are enriched in low complexity.

It belongs to the Asr family. In terms of processing, proteolytic processing gives rise to the active protein.

It is found in the periplasm. Required for growth and/or survival at acidic conditions. The protein is Acid shock protein of Shigella flexneri.